Reading from the N-terminus, the 343-residue chain is Holliday junction branch migration complex subunit RuvB (343 aa).

Positions 1-20 (MEEMASRMISGDPELGEPFQ) are disordered. The tract at residues 1-185 (MEEMASRMIS…FGILARMQFY (185 aa)) is large ATPase domain (RuvB-L). ATP-binding positions include leucine 24, arginine 25, glycine 66, lysine 69, threonine 70, threonine 71, 132-134 (EDF), arginine 175, tyrosine 185, and arginine 222. Threonine 70 provides a ligand contact to Mg(2+). Positions 186–256 (EPDELQQIVT…LADRALLALE (71 aa)) are small ATPAse domain (RuvB-S). The tract at residues 259–343 (RNGLDNMDHR…PRPVQQGTLL (85 aa)) is head domain (RuvB-H). The DNA site is built by arginine 295, arginine 314, and arginine 319.

Belongs to the RuvB family. As to quaternary structure, homohexamer. Forms an RuvA(8)-RuvB(12)-Holliday junction (HJ) complex. HJ DNA is sandwiched between 2 RuvA tetramers; dsDNA enters through RuvA and exits via RuvB. An RuvB hexamer assembles on each DNA strand where it exits the tetramer. Each RuvB hexamer is contacted by two RuvA subunits (via domain III) on 2 adjacent RuvB subunits; this complex drives branch migration. In the full resolvosome a probable DNA-RuvA(4)-RuvB(12)-RuvC(2) complex forms which resolves the HJ.

The protein resides in the cytoplasm. It carries out the reaction ATP + H2O = ADP + phosphate + H(+). Its function is as follows. The RuvA-RuvB-RuvC complex processes Holliday junction (HJ) DNA during genetic recombination and DNA repair, while the RuvA-RuvB complex plays an important role in the rescue of blocked DNA replication forks via replication fork reversal (RFR). RuvA specifically binds to HJ cruciform DNA, conferring on it an open structure. The RuvB hexamer acts as an ATP-dependent pump, pulling dsDNA into and through the RuvAB complex. RuvB forms 2 homohexamers on either side of HJ DNA bound by 1 or 2 RuvA tetramers; 4 subunits per hexamer contact DNA at a time. Coordinated motions by a converter formed by DNA-disengaged RuvB subunits stimulates ATP hydrolysis and nucleotide exchange. Immobilization of the converter enables RuvB to convert the ATP-contained energy into a lever motion, pulling 2 nucleotides of DNA out of the RuvA tetramer per ATP hydrolyzed, thus driving DNA branch migration. The RuvB motors rotate together with the DNA substrate, which together with the progressing nucleotide cycle form the mechanistic basis for DNA recombination by continuous HJ branch migration. Branch migration allows RuvC to scan DNA until it finds its consensus sequence, where it cleaves and resolves cruciform DNA. This chain is Holliday junction branch migration complex subunit RuvB, found in Magnetococcus marinus (strain ATCC BAA-1437 / JCM 17883 / MC-1).